Here is a 95-residue protein sequence, read N- to C-terminus: Small ribosomal subunit protein uS19 (95 aa).

This sequence belongs to the universal ribosomal protein uS19 family.

Functionally, protein S19 forms a complex with S13 that binds strongly to the 16S ribosomal RNA. This Coxiella burnetii (strain CbuK_Q154) (Coxiella burnetii (strain Q154)) protein is Small ribosomal subunit protein uS19.